A 93-amino-acid polypeptide reads, in one-letter code: Small ribosomal subunit protein uS15 (93 aa).

This sequence belongs to the universal ribosomal protein uS15 family. Part of the 30S ribosomal subunit. Forms a bridge to the 50S subunit in the 70S ribosome, contacting the 23S rRNA.

Functionally, one of the primary rRNA binding proteins, it binds directly to 16S rRNA where it helps nucleate assembly of the platform of the 30S subunit by binding and bridging several RNA helices of the 16S rRNA. Its function is as follows. Forms an intersubunit bridge (bridge B4) with the 23S rRNA of the 50S subunit in the ribosome. This is Small ribosomal subunit protein uS15 from Anaplasma marginale (strain Florida).